The sequence spans 161 residues: MSLRPIETAIASLTMLMLQGCAHAGKLDEKVPYPQPADGYQRNVIHLPMLADEENTKLELQVGKTMQVDCNHHSFGATVVEHTVKGWGYPYYEVNSIGGPISTRMACPSGTETSKFVAAHGNGFVVRYNSKLPVVVYIPQGFELRYRTWQPVQEFQTVPQD.

A signal peptide spans 1 to 24; sequence MSLRPIETAIASLTMLMLQGCAHA.

The protein belongs to the protease inhibitor I11 (ecotin) family.

The protein is Putative ecotin-like protein of Methylobacillus flagellatus (strain ATCC 51484 / DSM 6875 / VKM B-1610 / KT).